The chain runs to 245 residues: NAD(P)H-quinone oxidoreductase subunit K (245 aa).

[4Fe-4S] cluster is bound by residues cysteine 58, cysteine 59, cysteine 123, and cysteine 154.

The protein belongs to the complex I 20 kDa subunit family. As to quaternary structure, NDH-1 can be composed of about 15 different subunits; different subcomplexes with different compositions have been identified which probably have different functions. [4Fe-4S] cluster serves as cofactor.

The protein localises to the cellular thylakoid membrane. The catalysed reaction is a plastoquinone + NADH + (n+1) H(+)(in) = a plastoquinol + NAD(+) + n H(+)(out). It catalyses the reaction a plastoquinone + NADPH + (n+1) H(+)(in) = a plastoquinol + NADP(+) + n H(+)(out). In terms of biological role, NDH-1 shuttles electrons from an unknown electron donor, via FMN and iron-sulfur (Fe-S) centers, to quinones in the respiratory and/or the photosynthetic chain. The immediate electron acceptor for the enzyme in this species is believed to be plastoquinone. Couples the redox reaction to proton translocation, and thus conserves the redox energy in a proton gradient. Cyanobacterial NDH-1 also plays a role in inorganic carbon-concentration. This is NAD(P)H-quinone oxidoreductase subunit K from Nostoc sp. (strain PCC 7120 / SAG 25.82 / UTEX 2576).